We begin with the raw amino-acid sequence, 390 residues long: Peroxisomal sarcosine oxidase (390 aa).

9 to 39 contacts FAD; sequence DAIVIGAGIQGCFTAYHLAKHSKSVLLLEQF. N6-acetyllysine is present on residues lysine 126 and lysine 287. Cysteine 319 is modified (S-8alpha-FAD cysteine). A Microbody targeting signal motif is present at residues 388–390; sequence AHL.

This sequence belongs to the MSOX/MTOX family. It depends on FAD as a cofactor. As to expression, kidney and liver.

The protein localises to the peroxisome. The catalysed reaction is sarcosine + O2 + H2O = formaldehyde + glycine + H2O2. The enzyme catalyses L-pipecolate + O2 = L-1-piperideine-6-carboxylate + H2O2 + H(+). Functionally, metabolizes sarcosine, L-pipecolic acid and L-proline. The sequence is that of Peroxisomal sarcosine oxidase (Pipox) from Mus musculus (Mouse).